A 133-amino-acid polypeptide reads, in one-letter code: Large ribosomal subunit protein uL15 (133 aa).

A disordered region spans residues 1–64; it reads MGLENLKPAK…QPLQRRLPKI (64 aa).

It belongs to the universal ribosomal protein uL15 family. As to quaternary structure, part of the 50S ribosomal subunit.

Functionally, binds to the 23S rRNA. The polypeptide is Large ribosomal subunit protein uL15 (Helicobacter pylori (strain G27)).